Reading from the N-terminus, the 296-residue chain is Outer surface protein B (296 aa).

Residues 1–15 (MRLLIGFALALALIG) form the signal peptide. Residue Cys16 is the site of N-palmitoyl cysteine attachment. The S-diacylglycerol cysteine moiety is linked to residue Cys16. The tract at residues 25–51 (GSQKENDLNLEDSSKKSHQNAKQDLPA) is disordered. Over residues 28 to 39 (KENDLNLEDSSK) the composition is skewed to basic and acidic residues.

It is found in the cell outer membrane. The chain is Outer surface protein B (ospB) from Borreliella burgdorferi (strain ATCC 35210 / DSM 4680 / CIP 102532 / B31) (Borrelia burgdorferi).